Reading from the N-terminus, the 309-residue chain is Probable lipid kinase YegS-like (309 aa).

The 134-residue stretch at 1–134 (MAPSHWRVIL…VDLLRIDADH (134 aa)) folds into the DAGKc domain. ATP-binding positions include T39, 65-71 (GDGTLSE), and T96. Mg(2+) contacts are provided by L219, D222, and L224. The active-site Proton acceptor is the E280.

The protein belongs to the diacylglycerol/lipid kinase family. YegS lipid kinase subfamily. Mg(2+) is required as a cofactor. It depends on Ca(2+) as a cofactor.

The protein localises to the cytoplasm. Its function is as follows. Probably phosphorylates lipids; the in vivo substrate is unknown. This Xanthomonas euvesicatoria pv. vesicatoria (strain 85-10) (Xanthomonas campestris pv. vesicatoria) protein is Probable lipid kinase YegS-like.